The sequence spans 509 residues: Zinc finger protein Aiolos (509 aa).

The segment covering 1–19 (MEDIQTNAELKSTQEQSVP) has biased composition (polar residues). The tract at residues 1–86 (MEDIQTNAEL…MGNAEEPEIP (86 aa)) is disordered. 2 positions are modified to phosphoserine: Ser-22 and Ser-42. Residues 56 to 72 (DSMKVKDEYSERDENVL) are compositionally biased toward basic and acidic residues. Residues Lys-61, Lys-73, and Lys-100 each participate in a glycyl lysine isopeptide (Lys-Gly) (interchain with G-Cter in SUMO2) cross-link. 3 consecutive C2H2-type zinc fingers follow at residues 118 to 140 (MNCDVCGLSCISFNVLMVHKRSH), 146 to 168 (FQCNQCGASFTQKGNLLRHIKLH), and 174 to 196 (FKCHLCNYACQRRDALTGHLRTH). The C2H2-type 4; atypical zinc-finger motif lies at 202–224 (YKCEFCGRSYKQRSSLEEHKERC). Lys-245 participates in a covalent cross-link: Glycyl lysine isopeptide (Lys-Gly) (interchain with G-Cter in SUMO2). Thr-326 is subject to Phosphothreonine. Residues 364-394 (IHLPEKSVPSERGLSPNNSGHDSTDTDSNHE) form a disordered region. At Ser-378 the chain carries Phosphoserine. Over residues 385-394 (DSTDTDSNHE) the composition is skewed to basic and acidic residues. The C2H2-type 5 zinc-finger motif lies at 452–474 (YRCDHCRVLFLDYVMFTIHMGCH). The segment at 452-504 (YRCDHCRVLFLDYVMFTIHMGCHGFRDPFECNMCGYRSHDRYEFSSHIARGEH) is mediates homodimerization and heterodimerization. Residues 480–504 (FECNMCGYRSHDRYEFSSHIARGEH) form a C2H2-type 6; atypical zinc finger.

This sequence belongs to the Ikaros C2H2-type zinc-finger protein family. As to quaternary structure, homodimer. Heterodimer with other IKAROS family members. Interacts with IKZF4 and IKZF5. Interacts with IKZF1. Interacts with HRAS. Interacts with FOXP3; this interaction may be required for silencing target genes and regulating the suppressive activity of FOXP3-positive regulatory T-cells (Treg). Interacts with BCL21L isoform Bcl-X(L); this interaction blocks the anti-apoptotic role of BCL21L. Associates with histone deacetylase complexes containing HDAC1, MTA2 and SIN3A. In terms of processing, phosphorylation on tyrosine residues induced by IL2 is required for dissociation from HRAS and nuclear translocation of IKZF3 in T-cells. Phosphorylation on tyrosine residues induced by IL4 is required for dissociation from Bcl-X(L) in T-cells. In terms of tissue distribution, expressed most strongly in peripheral blood leukocytes, the spleen, and the thymus.

It is found in the nucleus. The protein localises to the cytoplasm. Transcription factor that plays an important role in the regulation of lymphocyte differentiation. Plays an essential role in regulation of B-cell differentiation, proliferation and maturation to an effector state. Involved in regulating BCL2 expression and controlling apoptosis in T-cells in an IL2-dependent manner. This Homo sapiens (Human) protein is Zinc finger protein Aiolos (IKZF3).